The chain runs to 81 residues: Cytotoxin 1 (81 aa).

Positions 1–21 are cleaved as a signal peptide; sequence MKTLLLTLVVVTIVCLDLGYT. Disulfide bonds link cysteine 24-cysteine 42, cysteine 35-cysteine 59, cysteine 63-cysteine 74, and cysteine 75-cysteine 80.

This sequence belongs to the three-finger toxin family. Short-chain subfamily. Type IA cytotoxin sub-subfamily. As to quaternary structure, monomer in solution; homodimer and oligomer in the presence of negatively charged lipids forming a pore with a size ranging between 20 and 30 Angstroms. As to expression, expressed by the venom gland.

It localises to the secreted. Its subcellular location is the target cell membrane. Functionally, shows cytolytic activity on many different cells by forming pores in lipid membranes. Exhibits concentration-dependent growth inhibitory effects in the lung cell lines A549 (IC(50)= 0.88) and NL20 (IC(50)= 1.91), in the prostate cell lines PC-3 (IC(50)= 3.13 ug/ml) and RWPE-1 (IC(50)=0.35 ug/ml), and in the breast cell lines MCF-7 (IC(50)= 9.10 ug/ml) and 184B5 (IC(50)=6.21 ug/ml), with high selectivity for the lung cancer cell line A549 (selectivity index=2.17). Induces primarily necrosis in the A549 lung cancer cell line, and mainly caspase-independent late apoptosis in the breast cancer cells line MCF-7 and in the prostate cancer cell line PC-3. In Naja sumatrana (Equatorial spitting cobra), this protein is Cytotoxin 1.